A 3390-amino-acid polypeptide reads, in one-letter code: Genome polyprotein (3390 aa).

The interaction with host EXOC1 stretch occupies residues 1-15 (MNNQRKKTGKPSINM). The Cytoplasmic portion of the chain corresponds to 1–100 (MNNQRKKTGK…MLSIINKRKK (100 aa)). A hydrophobic; homodimerization of capsid protein C region spans residues 37–72 (LLNGQGPMKLVMAFIAFLRFLAIPPTAGVLARWGTF). Positions 101–114 (TSLCLMMMLPATLA) are cleaved as a propeptide — ER anchor for the capsid protein C, removed in mature form by serine protease NS3. A helical transmembrane segment spans residues 101–118 (TSLCLMMMLPATLAFHLT). Topologically, residues 119–243 (SRDGEPRMIV…VEKVETWALR (125 aa)) are extracellular. N-linked (GlcNAc...) asparagine; by host glycosylation is present at Asn183. Residues 244–264 (HPGFTILALFLAHYIGTSLTQ) traverse the membrane as a helical segment. Lys265 is a topological domain (cytoplasmic). Residues 266-280 (VVIFILLMLVTPSMT) form a helical membrane-spanning segment. The Extracellular segment spans residues 281–723 (MRCVGVGNRD…VHQIFGSAYT (443 aa)). 4 disulfides stabilise this stretch: Cys283/Cys310, Cys340/Cys401, Cys354/Cys385, and Cys372/Cys396. Asn347 carries an N-linked (GlcNAc...) asparagine; by host glycan. Residues 378–391 (DRGWGNGCGLFGKG) form a fusion peptide region. N-linked (GlcNAc...) asparagine; by host glycosylation is present at Asn433. 2 disulfides stabilise this stretch: Cys463/Cys563 and Cys580/Cys611. A helical membrane pass occupies residues 724–744 (ALFSGVSWIMKIGIGVLLTWI). The Cytoplasmic portion of the chain corresponds to 745–750 (GLNSKN). The helical transmembrane segment at 751 to 771 (TSMSFSCIAIGIITLYLGVVV) threads the bilayer. Topologically, residues 772–1193 (QADMGCVINW…MIGSNASDRM (422 aa)) are extracellular. 6 disulfide bridges follow: Cys777-Cys788, Cys828-Cys916, Cys952-Cys996, Cys1053-Cys1102, Cys1064-Cys1086, and Cys1085-Cys1089. 2 N-linked (GlcNAc...) asparagine; by host glycosylation sites follow: Asn903 and Asn980. N-linked (GlcNAc...) asparagine; by host glycosylation is found at Asn1132 and Asn1188. Residues 1194–1218 (GMGVTYLALIATFKIQPFLALGFFL) form a helical membrane-spanning segment. The Cytoplasmic segment spans residues 1219–1224 (RKLTSR). The helical transmembrane segment at 1225-1243 (ENLLLGVGLAMAATLRLPE) threads the bilayer. Residues 1244-1267 (DIEQMANGIALGLMALKLITQFET) lie on the Lumenal side of the membrane. Residues 1268–1288 (YQLWTALVSLTCSNTIFTLTV) form a helical membrane-spanning segment. Position 1289 (Ala1289) is a topological domain, cytoplasmic. The chain crosses the membrane as a helical span at residues 1290–1308 (WRTATLILAGISLLPVCQS). Residues 1309-1315 (SSMRKTD) are Lumenal-facing. The chain crosses the membrane as a helical span at residues 1316 to 1336 (WLPMTVAAMGVPPLPLFIFSL). Topologically, residues 1337–1344 (KDTLKRRS) are cytoplasmic. A helical transmembrane segment spans residues 1345-1365 (WPLNEGVMAVGLVSILASSLL). Residues 1366 to 1368 (RND) lie on the Lumenal side of the membrane. A helical membrane pass occupies residues 1369–1389 (VPMAGPLVAGGLLIACYVITG). The Cytoplasmic segment spans residues 1390 to 1443 (TSADLTVEKAADVTWEEEAEQTGVSHNLMITVDDDGTMRIKDDETENILTVLLK). The interval 1396-1435 (VEKAADVTWEEEAEQTGVSHNLMITVDDDGTMRIKDDETE) is interacts with and activates NS3 protease. Positions 1444–1464 (TALLIVSGIFPYSIPATMLVW) form an intramembrane region, helical. The Cytoplasmic segment spans residues 1465–2146 (HTWQKQTQRS…VEELPETMET (682 aa)). The Peptidase S7 domain occupies 1474–1651 (SGVLWDVPSP…NAEPDGPTPE (178 aa)). Catalysis depends on charge relay system; for serine protease NS3 activity residues His1524, Asp1548, and Ser1608. The region spanning 1654–1810 (EEMFKKRNLT…QSNAPIQDEE (157 aa)) is the Helicase ATP-binding domain. An important for RNA-binding region spans residues 1658–1661 (KKRN). An ATP-binding site is contributed by 1667 to 1674 (LHPGSGKT). Positions 1758–1761 (DEAH) match the DEAH box motif. The Helicase C-terminal domain occupies 1821 to 1986 (GNEWITDFVG…GIIPALFEPE (166 aa)). Lys1862 is modified (N6-acetyllysine; by host). The helical transmembrane segment at 2147 to 2167 (LLLLGLMILLTGGAMLFLISG) threads the bilayer. Over 2168–2169 (KG) the chain is Lumenal. Positions 2170-2190 (IGKTSIGLICVIASSGMLWMA) form an intramembrane region, helical. Position 2191 (Asp2191) is a topological domain, lumenal. The helical transmembrane segment at 2192–2212 (VPLQWIASAIVLEFFMMVLLI) threads the bilayer. The Cytoplasmic portion of the chain corresponds to 2213-2227 (PEPEKQRTPQDNQLA). Residues 2228-2248 (YVVIGILTLAAIVAANEMGLL) form a helical membrane-spanning segment. The Lumenal segment spans residues 2249-2273 (ETTKRDLGMSKEPGVVSPTSYLDVD). Positions 2274-2294 (LHPASAWTLYAVATTVITPML) form an intramembrane region, helical. Topologically, residues 2295–2305 (RHTIENSTANV) are lumenal. Residues Asn2300 and Asn2304 are each glycosylated (N-linked (GlcNAc...) asparagine; by host). The segment at residues 2306–2326 (SLAAIANQAVVLMGLDKGWPI) is an intramembrane region (helical). The Lumenal portion of the chain corresponds to 2327–2346 (SKMDLGVPLLALGCYSQVNP). A helical membrane pass occupies residues 2347–2367 (LTLIAAVLLLVTHYAIIGPGL). The Cytoplasmic portion of the chain corresponds to 2368–2412 (QAKATREAQKRTAAGIMKNPTVDGIMTIDLDPVIYDSKFEKQLGQ). Residues 2413-2433 (VMLLVLCAVQLLLMRTSWALC) form a helical membrane-spanning segment. Over 2434-2458 (EVLTLATGPITTLWEGSPGKFWNTT) the chain is Lumenal. N-linked (GlcNAc...) asparagine; by host glycosylation occurs at Asn2456. Residues 2459–2479 (IAVSMANIFRGSYLAGAGLAL) traverse the membrane as a helical segment. Over 2480–3390 (SIMKSVGTGK…KEEESEGAIW (911 aa)) the chain is Cytoplasmic. In terms of domain architecture, mRNA cap 0-1 NS5-type MT spans 2492–2753 (TGSQGETLGE…DVDLGAGTRH (262 aa)). Ser2546 provides a ligand contact to S-adenosyl-L-methionine. Position 2546 is a phosphoserine (Ser2546). Lys2551 functions as the For 2'-O-MTase activity in the catalytic mechanism. An SUMO-interacting motif motif is present at residues 2567–2570 (VIDL). Residues Gly2576, Trp2577, Thr2594, Lys2595, Asp2621, and Val2622 each contribute to the S-adenosyl-L-methionine site. The active-site For 2'-O-MTase activity is Asp2636. Position 2637 (Ile2637) interacts with S-adenosyl-L-methionine. Active-site for 2'-O-MTase activity residues include Lys2670 and Glu2706. Tyr2708 lines the S-adenosyl-L-methionine pocket. Residues Glu2927, His2931, Cys2936, and Cys2939 each contribute to the Zn(2+) site. Positions 3018-3168 (AMYADDTAGW…PIDDRFANAL (151 aa)) constitute a RdRp catalytic domain. His3202, Cys3218, and Cys3337 together coordinate Zn(2+).

The protein in the N-terminal section; belongs to the class I-like SAM-binding methyltransferase superfamily. mRNA cap 0-1 NS5-type methyltransferase family. In terms of assembly, homodimer. Interacts (via N-terminus) with host EXOC1 (via C-terminus); this interaction results in EXOC1 degradation through the proteasome degradation pathway. Forms heterodimers with envelope protein E in the endoplasmic reticulum and Golgi. As to quaternary structure, homodimer; in the endoplasmic reticulum and Golgi. Interacts with protein prM. Interacts with non-structural protein 1. In terms of assembly, homodimer; Homohexamer when secreted. Interacts with envelope protein E. Interacts (via N-terminus) with serine protease NS3. As to quaternary structure, forms a heterodimer with serine protease NS3. May form homooligomers. In terms of assembly, forms a heterodimer with NS2B. Interacts with NS4B. Interacts with unphosphorylated RNA-directed RNA polymerase NS5; this interaction stimulates RNA-directed RNA polymerase NS5 guanylyltransferase activity. Interacts with host SHFL. Interacts with host MAVS; this interaction inhibits the synthesis of IFN-beta. Interacts with host SHFL. Interacts with host AUP1; the interaction occurs in the presence of Dengue virus NS4B and induces lipophagy which facilitates production of virus progeny particles. As to quaternary structure, interacts with serine protease NS3. In terms of assembly, homodimer. Interacts with host STAT2; this interaction inhibits the phosphorylation of the latter, and, when all viral proteins are present (polyprotein), targets STAT2 for degradation. Interacts with serine protease NS3. Specific enzymatic cleavages in vivo yield mature proteins. Cleavages in the lumen of endoplasmic reticulum are performed by host signal peptidase, whereas cleavages in the cytoplasmic side are performed by serine protease NS3. Signal cleavage at the 2K-4B site requires a prior NS3 protease-mediated cleavage at the 4A-2K site. Post-translationally, cleaved in post-Golgi vesicles by a host furin, releasing the mature small envelope protein M, and peptide pr. This cleavage is incomplete as up to 30% of viral particles still carry uncleaved prM. In terms of processing, N-glycosylated. N-glycosylated. The excreted form is glycosylated and this is required for efficient secretion of the protein from infected cells. Post-translationally, acetylated by host KAT5. Acetylation modulates NS3 RNA-binding and unwinding activities and plays an important positive role for viral replication. In terms of processing, sumoylation of RNA-directed RNA polymerase NS5 increases NS5 protein stability allowing proper viral RNA replication. Phosphorylated on serines residues. This phosphorylation may trigger NS5 nuclear localization.

The protein localises to the virion. Its subcellular location is the host nucleus. It localises to the host cytoplasm. The protein resides in the host perinuclear region. It is found in the secreted. The protein localises to the virion membrane. Its subcellular location is the host endoplasmic reticulum membrane. It localises to the host mitochondrion. It catalyses the reaction Selective hydrolysis of -Xaa-Xaa-|-Yaa- bonds in which each of the Xaa can be either Arg or Lys and Yaa can be either Ser or Ala.. It carries out the reaction RNA(n) + a ribonucleoside 5'-triphosphate = RNA(n+1) + diphosphate. The enzyme catalyses a ribonucleoside 5'-triphosphate + H2O = a ribonucleoside 5'-diphosphate + phosphate + H(+). The catalysed reaction is ATP + H2O = ADP + phosphate + H(+). It catalyses the reaction a 5'-end (5'-triphosphoguanosine)-ribonucleoside in mRNA + S-adenosyl-L-methionine = a 5'-end (N(7)-methyl 5'-triphosphoguanosine)-ribonucleoside in mRNA + S-adenosyl-L-homocysteine. It carries out the reaction a 5'-end (N(7)-methyl 5'-triphosphoguanosine)-ribonucleoside in mRNA + S-adenosyl-L-methionine = a 5'-end (N(7)-methyl 5'-triphosphoguanosine)-(2'-O-methyl-ribonucleoside) in mRNA + S-adenosyl-L-homocysteine + H(+). In terms of biological role, plays a role in virus budding by binding to the cell membrane and gathering the viral RNA into a nucleocapsid that forms the core of a mature virus particle. During virus entry, may induce genome penetration into the host cytoplasm after hemifusion induced by the surface proteins. Can migrate to the cell nucleus where it modulates host functions. Overcomes the anti-viral effects of host EXOC1 by sequestering and degrading the latter through the proteasome degradation pathway. Functionally, inhibits RNA silencing by interfering with host Dicer. Prevents premature fusion activity of envelope proteins in trans-Golgi by binding to envelope protein E at pH6.0. After virion release in extracellular space, gets dissociated from E dimers. Its function is as follows. Acts as a chaperone for envelope protein E during intracellular virion assembly by masking and inactivating envelope protein E fusion peptide. prM is the only viral peptide matured by host furin in the trans-Golgi network probably to avoid catastrophic activation of the viral fusion activity in acidic Golgi compartment prior to virion release. prM-E cleavage is inefficient, and many virions are only partially matured. These uncleaved prM would play a role in immune evasion. In terms of biological role, may play a role in virus budding. Exerts cytotoxic effects by activating a mitochondrial apoptotic pathway through M ectodomain. May display a viroporin activity. Functionally, binds to host cell surface receptor and mediates fusion between viral and cellular membranes. Envelope protein is synthesized in the endoplasmic reticulum in the form of heterodimer with protein prM. They play a role in virion budding in the ER, and the newly formed immature particle is covered with 60 spikes composed of heterodimer between precursor prM and envelope protein E. The virion is transported to the Golgi apparatus where the low pH causes dissociation of PrM-E heterodimers and formation of E homodimers. prM-E cleavage is inefficient, and many virions are only partially matured. These uncleaved prM would play a role in immune evasion. Involved in immune evasion, pathogenesis and viral replication. Once cleaved off the polyprotein, is targeted to three destinations: the viral replication cycle, the plasma membrane and the extracellular compartment. Essential for viral replication. Required for formation of the replication complex and recruitment of other non-structural proteins to the ER-derived membrane structures. Excreted as a hexameric lipoparticle that plays a role against host immune response. Antagonizing the complement function. Binds to the host macrophages and dendritic cells. Inhibits signal transduction originating from Toll-like receptor 3 (TLR3). Its function is as follows. Disrupts the host endothelial glycocalyx layer of host pulmonary microvascular endothelial cells, inducing degradation of sialic acid and shedding of heparan sulfate proteoglycans. NS1 induces expression of sialidases, heparanase, and activates cathepsin L, which activates heparanase via enzymatic cleavage. These effects are probably linked to the endothelial hyperpermeability observed in severe dengue disease. In terms of biological role, component of the viral RNA replication complex that functions in virion assembly and antagonizes the host immune response. Functionally, required cofactor for the serine protease function of NS3. May have membrane-destabilizing activity and form viroporins. Displays three enzymatic activities: serine protease, NTPase and RNA helicase. NS3 serine protease, in association with NS2B, performs its autocleavage and cleaves the polyprotein at dibasic sites in the cytoplasm: C-prM, NS2A-NS2B, NS2B-NS3, NS3-NS4A, NS4A-2K and NS4B-NS5. NS3 RNA helicase binds RNA and unwinds dsRNA in the 3' to 5' direction. Its function is as follows. Regulates the ATPase activity of the NS3 helicase activity. NS4A allows NS3 helicase to conserve energy during unwinding. Plays a role in the inhibition of the host innate immune response. Interacts with host MAVS and thereby prevents the interaction between RIGI and MAVS. In turn, IFN-beta production is impaired. Interacts with host AUP1 which mediates induction of lipophagy in host cells and facilitates production of virus progeny particles. In terms of biological role, functions as a signal peptide for NS4B and is required for the interferon antagonism activity of the latter. Functionally, induces the formation of ER-derived membrane vesicles where the viral replication takes place. Inhibits interferon (IFN)-induced host STAT1 phosphorylation and nuclear translocation, thereby preventing the establishment of cellular antiviral state by blocking the IFN-alpha/beta pathway. Replicates the viral (+) and (-) RNA genome, and performs the capping of genomes in the cytoplasm. NS5 methylates viral RNA cap at guanine N-7 and ribose 2'-O positions. Besides its role in RNA genome replication, also prevents the establishment of cellular antiviral state by blocking the interferon-alpha/beta (IFN-alpha/beta) signaling pathway. Inhibits host TYK2 and STAT2 phosphorylation, thereby preventing activation of JAK-STAT signaling pathway. This chain is Genome polyprotein, found in Dengue virus type 3 (strain Philippines/H87/1956) (DENV-3).